The chain runs to 513 residues: Bifunctional pantoate ligase/cytidylate kinase (513 aa).

The tract at residues 1-283 is pantoate--beta-alanine ligase; the sequence is MVQVFRTIAG…VGSTRLIDNL (283 aa). Residue 30–37 coordinates ATP; the sequence is MGSLHAGH. Catalysis depends on histidine 37, which acts as the Proton donor. A (R)-pantoate-binding site is contributed by glutamine 61. Beta-alanine is bound at residue glutamine 61. An ATP-binding site is contributed by 150–153; the sequence is GAKD. Residue glutamine 156 participates in (R)-pantoate binding. ATP-binding positions include valine 179 and 187 to 190; that span reads MSSR. The tract at residues 284-513 is cytidylate kinase; sequence VLNHRLPIIA…IELYKKYNKG (230 aa).

The protein in the N-terminal section; belongs to the pantothenate synthetase family. This sequence in the C-terminal section; belongs to the cytidylate kinase family. Type 1 subfamily.

It localises to the cytoplasm. It carries out the reaction (R)-pantoate + beta-alanine + ATP = (R)-pantothenate + AMP + diphosphate + H(+). It catalyses the reaction CMP + ATP = CDP + ADP. The enzyme catalyses dCMP + ATP = dCDP + ADP. It functions in the pathway cofactor biosynthesis; (R)-pantothenate biosynthesis; (R)-pantothenate from (R)-pantoate and beta-alanine: step 1/1. Functionally, catalyzes the condensation of pantoate with beta-alanine in an ATP-dependent reaction via a pantoyl-adenylate intermediate. Its function is as follows. Catalyzes the transfer of a phosphate group from ATP to either CMP or dCMP to form CDP or dCDP and ADP, respectively. The protein is Bifunctional pantoate ligase/cytidylate kinase of Synechocystis sp. (strain ATCC 27184 / PCC 6803 / Kazusa).